Reading from the N-terminus, the 105-residue chain is Met repressor (105 aa).

It belongs to the MetJ family. Homodimer.

The protein localises to the cytoplasm. Its function is as follows. This regulatory protein, when combined with SAM (S-adenosylmethionine) represses the expression of the methionine regulon and of enzymes involved in SAM synthesis. This chain is Met repressor, found in Actinobacillus pleuropneumoniae serotype 7 (strain AP76).